A 90-amino-acid polypeptide reads, in one-letter code: Probable Fe(2+)-trafficking protein (90 aa).

Belongs to the Fe(2+)-trafficking protein family.

Its function is as follows. Could be a mediator in iron transactions between iron acquisition and iron-requiring processes, such as synthesis and/or repair of Fe-S clusters in biosynthetic enzymes. The polypeptide is Probable Fe(2+)-trafficking protein (Thioalkalivibrio sulfidiphilus (strain HL-EbGR7)).